We begin with the raw amino-acid sequence, 99 residues long: Malonate decarboxylase acyl carrier protein (99 aa).

Residue serine 25 is modified to O-(phosphoribosyl dephospho-coenzyme A)serine.

This sequence belongs to the MdcC family. In terms of processing, covalently binds the prosthetic group of malonate decarboxylase.

It localises to the cytoplasm. Functionally, subunit of malonate decarboxylase, it is an acyl carrier protein to which acetyl and malonyl thioester residues are bound via a 2'-(5''-phosphoribosyl)-3'-dephospho-CoA prosthetic group and turn over during the catalytic mechanism. This chain is Malonate decarboxylase acyl carrier protein, found in Pseudomonas syringae pv. syringae (strain B728a).